Reading from the N-terminus, the 328-residue chain is MELVVEPLNLHLNAETGSTLLDVLRSNEVPISYSCMSGRCGTCRCRVIAGHLRDNGPETGRPQAGKGTYVLACQAVLTEDCTIEIPESDEIVVHPARIVKGTVTAIDEATHDIRRLRIKLAKPLEFSPGQYATVQFTPECVRPYSMAGLPSDAEMEFQIRAVPGGHVSNYVFNELSVGASVRISGPLGTAYLRRTHTGPMLCVGGGTGLAPVLSIVRGALESGMSNPIHLYFGVRSEQDIYDEERLHALAARFPNLKVNVVVATGPAGPGRRSGLVTDLIGRDLPNLAGWRAYLCGAPAMVEALNLLVARLGIVPGHIHADAFYPSGV.

Residues 1–89 (MELVVEPLNL…DCTIEIPESD (89 aa)) enclose the 2Fe-2S ferredoxin-type domain. The [2Fe-2S] cluster site is built by C35, C40, C43, and C73. In terms of domain architecture, FAD-binding FR-type spans 96 to 193 (ARIVKGTVTA…SGPLGTAYLR (98 aa)).

This sequence belongs to the bacterial ring-hydroxylating dioxygenase ferredoxin reductase family. Ferredoxin reductase NagAa belongs to both the salicylate 5-hydroxylase (S5H) and the naphthalene 1,2-dioxygenase (NDO) multicomponent enzyme systems. The NDO multicomponent enzyme system is composed of an electron transfer component and a dioxygenase component (iron sulfur protein (ISP)). The electron transfer component is composed of a ferredoxin reductase (NagAa) and a ferredoxin (NagAb), and the dioxygenase component is formed by a large alpha subunit (NagAc) and a small beta subunit (NagAd). The S5H multicomponent enzyme system is composed of an electron transfer component and a monooxygenase component. The electron transfer component is comprised of a ferredoxin reductase (NagAa) and a ferredoxin (NagAb), and the monooxygenase component is formed by a large subunit (NagG) and a small subunit (NagH). It depends on [2Fe-2S] cluster as a cofactor. FAD is required as a cofactor.

It catalyses the reaction 2 reduced [2Fe-2S]-[ferredoxin] + NAD(+) + H(+) = 2 oxidized [2Fe-2S]-[ferredoxin] + NADH. The catalysed reaction is 2 reduced [2Fe-2S]-[ferredoxin] + NADP(+) + H(+) = 2 oxidized [2Fe-2S]-[ferredoxin] + NADPH. It participates in aromatic compound metabolism; naphthalene degradation. Functionally, component of two multicomponent enzyme systems which are involved in the catabolism of naphthalene. Plays a role as an electron transfer component for both salicylate 5-hydroxylase (S5H) and naphthalene 1,2-dioxygenase (NDO) systems, by transferring electrons from NAD(P)H to the oxygenase component via the ferredoxin NagAb. The electron transport chain from the two systems can use both NADH and NADPH as electron donors at approximately similar rates. This is Naphthalene 1,2-dioxygenase/salicylate 5-hydroxylase systems, ferredoxin--NAD(P)(+), reductase component from Ralstonia sp.